We begin with the raw amino-acid sequence, 63 residues long: DNA-directed RNA polymerase 7 kDa subunit (63 aa).

This sequence belongs to the poxviridae DNA-directed RNA polymerase 7 kDa subunit family. In terms of assembly, the DNA-dependent RNA polymerase used for intermediate and late genes expression consists of eight subunits 147 kDa, 133 kDa, 35 kDa, 30 kDa, 22 kDa, 19 kDa, 18 kDa and 7 kDa totalling more than 500 kDa in mass. The same holoenzyme, with the addition of the transcription-specificity factor RAP94, is used for early gene expression.

The protein resides in the virion. It catalyses the reaction RNA(n) + a ribonucleoside 5'-triphosphate = RNA(n+1) + diphosphate. In terms of biological role, part of the DNA-dependent RNA polymerase which catalyzes the transcription of viral DNA into RNA using the four ribonucleoside triphosphates as substrates. Responsible for the transcription of early, intermediate and late genes. DNA-dependent RNA polymerase associates with the early transcription factor (ETF) thereby allowing the early genes transcription. Late transcription, and probably also intermediate transcription, require newly synthesized RNA polymerase. This is DNA-directed RNA polymerase 7 kDa subunit (RPO7) from Fowlpox virus (strain NVSL) (FPV).